A 131-amino-acid polypeptide reads, in one-letter code: Aspartate 1-decarboxylase (131 aa).

Residue Ser-25 is the Schiff-base intermediate with substrate; via pyruvic acid of the active site. Ser-25 carries the pyruvic acid (Ser) modification. Thr-57 contributes to the substrate binding site. Catalysis depends on Tyr-58, which acts as the Proton donor. 73–75 serves as a coordination point for substrate; sequence GAA.

It belongs to the PanD family. Heterooctamer of four alpha and four beta subunits. The cofactor is pyruvate. In terms of processing, is synthesized initially as an inactive proenzyme, which is activated by self-cleavage at a specific serine bond to produce a beta-subunit with a hydroxyl group at its C-terminus and an alpha-subunit with a pyruvoyl group at its N-terminus.

The protein localises to the cytoplasm. It catalyses the reaction L-aspartate + H(+) = beta-alanine + CO2. The protein operates within cofactor biosynthesis; (R)-pantothenate biosynthesis; beta-alanine from L-aspartate: step 1/1. In terms of biological role, catalyzes the pyruvoyl-dependent decarboxylation of aspartate to produce beta-alanine. This Anaeromyxobacter dehalogenans (strain 2CP-C) protein is Aspartate 1-decarboxylase.